Reading from the N-terminus, the 172-residue chain is Photosystem I assembly protein Ycf3 (172 aa).

3 TPR repeats span residues 35-68 (AFSY…EEDP), 72-105 (SYIL…NSQL), and 120-153 (GVKA…SPNN).

Belongs to the Ycf3 family.

Its subcellular location is the plastid. The protein resides in the chloroplast thylakoid membrane. Its function is as follows. Essential for the assembly of the photosystem I (PSI) complex. May act as a chaperone-like factor to guide the assembly of the PSI subunits. The sequence is that of Photosystem I assembly protein Ycf3 from Guillardia theta (Cryptophyte).